A 123-amino-acid polypeptide reads, in one-letter code: U7 snRNA-associated Sm-like protein LSm10 (123 aa).

In terms of domain architecture, Sm spans 16 to 88 (SLIILLQGLQ…VRYVHIPDDV (73 aa)).

It belongs to the snRNP Sm proteins family. Component of the heptameric ring U7 snRNP complex, or U7 Sm protein core complex, at least composed of LSM10, LSM11, SNRPB, SNRPD3, SNRPE, SNRPF, SNRPG and U7 snRNA. Formation of the U7 snRNP is an ATP-dependent process mediated by a specialized SMN complex containing at least the Sm protein core complex and additionally, the U7-specific LSM10 and LSM11 proteins. Interacts with CLNS1A and SMN. In terms of processing, not methylated. Methylation is not necessary for interaction with SMN.

The protein resides in the nucleus. Functionally, appears to function in the U7 snRNP complex that is involved in histone 3'-end processing. Increases U7 snRNA levels but not histone 3'-end pre-mRNA processing activity, when overexpressed. Required for cell cycle progression from G1 to S phases. Binds specifically to U7 snRNA. Binds to the downstream cleavage product (DCP) of histone pre-mRNA in a U7 snRNP dependent manner. In Homo sapiens (Human), this protein is U7 snRNA-associated Sm-like protein LSm10 (LSM10).